Here is a 459-residue protein sequence, read N- to C-terminus: Ribulose bisphosphate carboxylase (459 aa).

Asn-111 provides a ligand contact to substrate. Catalysis depends on Lys-166, which acts as the Proton acceptor. Lys-168 serves as a coordination point for substrate. Lys-191, Asp-193, and Glu-194 together coordinate Mg(2+). Lys-191 carries the post-translational modification N6-carboxylysine. The active-site Proton acceptor is the His-287. Arg-288, His-321, and Ser-368 together coordinate substrate.

Belongs to the RuBisCO large chain family. Type II subfamily. Homodimer. The cofactor is Mg(2+).

It carries out the reaction 2 (2R)-3-phosphoglycerate + 2 H(+) = D-ribulose 1,5-bisphosphate + CO2 + H2O. It catalyses the reaction D-ribulose 1,5-bisphosphate + O2 = 2-phosphoglycolate + (2R)-3-phosphoglycerate + 2 H(+). In terms of biological role, ruBisCO catalyzes two reactions: the carboxylation of D-ribulose 1,5-bisphosphate, the primary event in carbon dioxide fixation, as well as the oxidative fragmentation of the pentose substrate. Both reactions occur simultaneously and in competition at the same active site. The protein is Ribulose bisphosphate carboxylase of Polaromonas naphthalenivorans (strain CJ2).